A 165-amino-acid polypeptide reads, in one-letter code: Shikimate kinase (165 aa).

12–17 provides a ligand contact to ATP; that stretch reads GCGKST. S16 contributes to the Mg(2+) binding site. Residues D34, R57, and G79 each coordinate substrate. R116 serves as a coordination point for ATP. R133 provides a ligand contact to substrate.

Belongs to the shikimate kinase family. As to quaternary structure, monomer. Requires Mg(2+) as cofactor.

It localises to the cytoplasm. It carries out the reaction shikimate + ATP = 3-phosphoshikimate + ADP + H(+). Its pathway is metabolic intermediate biosynthesis; chorismate biosynthesis; chorismate from D-erythrose 4-phosphate and phosphoenolpyruvate: step 5/7. Functionally, catalyzes the specific phosphorylation of the 3-hydroxyl group of shikimic acid using ATP as a cosubstrate. The protein is Shikimate kinase of Clostridium botulinum (strain Alaska E43 / Type E3).